Reading from the N-terminus, the 561-residue chain is Zinc finger protein 394 (561 aa).

At S12 the chain carries Phosphoserine. K40 is covalently cross-linked (Glycyl lysine isopeptide (Lys-Gly) (interchain with G-Cter in SUMO2)). Residues 43 to 62 (EDSLGSWEPSYPAASPDPET) form a disordered region. Residues 64–146 (RLHFRQLRYQ…AVVRALQRAL (83 aa)) form the SCAN box domain. In terms of domain architecture, KRAB spans 155-230 (VTFEDMAVSL…LQEAFQGKRP (76 aa)). Residues K203 and K228 each participate in a glycyl lysine isopeptide (Lys-Gly) (interchain with G-Cter in SUMO2) cross-link. The segment covering 238-247 (THEDRVEKQS) has biased composition (basic and acidic residues). The disordered stretch occupies residues 238–283 (THEDRVEKQSGDPLPLKLENSPEAEGFNSISDVNKNGSIEGEDSKN). Residue K254 forms a Glycyl lysine isopeptide (Lys-Gly) (interchain with G-Cter in SUMO2) linkage. Residues 265 to 274 (NSISDVNKNG) are compositionally biased toward polar residues. A Glycyl lysine isopeptide (Lys-Gly) (interchain with G-Cter in SUMO2) cross-link involves residue K282. C2H2-type zinc fingers lie at residues 358–380 (YKCG…QRIH), 386–408 (YGCQ…QRTH), 414–436 (YTCL…QSTH), 442–463 (FKCE…QRLH), 469–491 (YKCE…HRIH), 497–519 (YGCS…QRIH), and 525–547 (YKCL…QRIH). A Glycyl lysine isopeptide (Lys-Gly) (interchain with G-Cter in SUMO2) cross-link involves residue K443.

Belongs to the krueppel C2H2-type zinc-finger protein family.

The protein resides in the nucleus. In terms of biological role, may be involved in transcriptional regulation. This Pan paniscus (Pygmy chimpanzee) protein is Zinc finger protein 394 (ZNF394).